A 411-amino-acid chain; its full sequence is Common plant regulatory factor 1 (411 aa).

Positions Met1–Lys14 are enriched in basic and acidic residues. Disordered regions lie at residues Met1 to His30, Ala130 to Ile197, and Ser232 to Glu293. Residues Thr148 to Glu164 show a composition bias toward polar residues. The segment covering Glu235–Ala244 has biased composition (basic and acidic residues). The segment covering Ala249–Pro259 has biased composition (polar residues). Positions Leu264–Glu293 are enriched in basic and acidic residues. Positions Asp269–Leu332 constitute a bZIP domain. Residues Lys271–Lys290 are basic motif. Residues Leu297–Leu332 are leucine-zipper. A disordered region spans residues Asp346–Gly411.

The protein belongs to the bZIP family. As to quaternary structure, binds DNA as a dimer.

The protein resides in the nucleus. In terms of biological role, binds to the G-box-like motif (5'-ACGTGGC-3') of the chalcone synthase (CHS) gene promoter. G-box and G-box-like motifs are defined in promoters of certain plant genes which are regulated by such diverse stimuli as light-induction or hormone control. In Petroselinum crispum (Parsley), this protein is Common plant regulatory factor 1 (CPRF1).